A 76-amino-acid chain; its full sequence is Serine proteinase inhibitor IA-2 (76 aa).

Serine 1 is modified (N-acetylserine).

It belongs to the protease inhibitor I9 family.

Its function is as follows. Specifically inhibits an intracellular serine proteinase (proteinase A). The polypeptide is Serine proteinase inhibitor IA-2 (Pleurotus ostreatus (Oyster mushroom)).